The sequence spans 88 residues: Sec-independent protein translocase protein TatA (88 aa).

Residues 1–21 (MGSLSPWHWAILAVVVIVLFG) form a helical membrane-spanning segment. A compositionally biased stretch (basic and acidic residues) spans 43-52 (MREMQSETKA). The segment at 43–88 (MREMQSETKAEPSAIETNTANPTPVQSQRIDPAAATGQDQTEARPA) is disordered. Over residues 57–71 (IETNTANPTPVQSQR) the composition is skewed to polar residues.

The protein belongs to the TatA/E family. The Tat system comprises two distinct complexes: a TatABC complex, containing multiple copies of TatA, TatB and TatC subunits, and a separate TatA complex, containing only TatA subunits. Substrates initially bind to the TatABC complex, which probably triggers association of the separate TatA complex to form the active translocon.

It is found in the cell membrane. Functionally, part of the twin-arginine translocation (Tat) system that transports large folded proteins containing a characteristic twin-arginine motif in their signal peptide across membranes. TatA could form the protein-conducting channel of the Tat system. The polypeptide is Sec-independent protein translocase protein TatA (Mycobacterium marinum (strain ATCC BAA-535 / M)).